Here is a 271-residue protein sequence, read N- to C-terminus: Eukaryotic translation initiation factor 3 subunit G (271 aa).

Disordered regions lie at residues methionine 1–aspartate 26, alanine 63–leucine 119, and threonine 147–serine 187. Serine 77 is subject to Phosphoserine. Residues threonine 188–lysine 267 form the RRM domain.

It belongs to the eIF-3 subunit G family. As to quaternary structure, component of the eukaryotic translation initiation factor 3 (eIF-3) complex.

It localises to the cytoplasm. Functionally, RNA-binding component of the eukaryotic translation initiation factor 3 (eIF-3) complex, which is involved in protein synthesis of a specialized repertoire of mRNAs and, together with other initiation factors, stimulates binding of mRNA and methionyl-tRNAi to the 40S ribosome. The eIF-3 complex specifically targets and initiates translation of a subset of mRNAs involved in cell proliferation. This subunit can bind 18S rRNA. This Scheffersomyces stipitis (strain ATCC 58785 / CBS 6054 / NBRC 10063 / NRRL Y-11545) (Yeast) protein is Eukaryotic translation initiation factor 3 subunit G.